The following is a 1097-amino-acid chain: Mitochondrial distribution and morphology protein 34 (1097 aa).

One can recognise an SMP-LTD domain in the interval 1–198 (MSFNFKWPTF…LPGIIHRLSQ (198 aa)). Disordered stretches follow at residues 204 to 305 (EAKS…PLHS), 317 to 343 (AAFP…SGFS), 390 to 427 (QSDD…LDAV), 480 to 520 (DDQP…TSSL), 556 to 600 (PEVD…SSRT), 645 to 675 (LDAE…RDLS), 716 to 817 (GQNA…SPGV), and 923 to 1097 (GSSA…AIRE). Basic and acidic residues predominate over residues 205–229 (AKSEKDKVKQKAEAEEPPARSREPT). A compositionally biased stretch (basic residues) spans 252–263 (RKSHSKAKKHSR). Positions 274 to 283 (SPCQSPQRPR) are enriched in low complexity. Residues 284-293 (QSPRRPRHVA) are compositionally biased toward basic residues. The span at 406-416 (SSSHDGKHDEG) shows a compositional bias: basic and acidic residues. Composition is skewed to low complexity over residues 508-519 (SSRSDRSACTSS) and 572-586 (GGTP…RFGS). Over residues 662-675 (TNPTSRESSYRDLS) the composition is skewed to polar residues. Low complexity predominate over residues 759–779 (GMSATPARTRASAAASARSRP). Polar residues predominate over residues 784-796 (YATSPPGDSSGWQ). Low complexity predominate over residues 923–943 (GSSAASGTGTTSGSSQTGANA). Over residues 1004–1024 (SNKPNNTSTGQGEDSQDNSAA) the composition is skewed to polar residues. Low complexity predominate over residues 1045–1059 (ASGSSASSAITDSSS).

This sequence belongs to the MDM34 family. Component of the ER-mitochondria encounter structure (ERMES) or MDM complex, composed of MMM1, MDM10, MDM12 and MDM34.

It localises to the mitochondrion outer membrane. Functionally, component of the ERMES/MDM complex, which serves as a molecular tether to connect the endoplasmic reticulum (ER) and mitochondria. Components of this complex are involved in the control of mitochondrial shape and protein biogenesis, and function in nonvesicular lipid trafficking between the ER and mitochondria. MDM34 is required for the interaction of the ER-resident membrane protein MMM1 and the outer mitochondrial membrane-resident beta-barrel protein MDM10. The polypeptide is Mitochondrial distribution and morphology protein 34 (Mycosarcoma maydis (Corn smut fungus)).